The primary structure comprises 64 residues: Large ribosomal subunit protein uL30 (64 aa).

It belongs to the universal ribosomal protein uL30 family. Part of the 50S ribosomal subunit.

In Bdellovibrio bacteriovorus (strain ATCC 15356 / DSM 50701 / NCIMB 9529 / HD100), this protein is Large ribosomal subunit protein uL30.